We begin with the raw amino-acid sequence, 317 residues long: Protein-methionine-sulfoxide reductase catalytic subunit MsrP (317 aa).

Positions M1–A40 form a signal peptide, tat-type signal. Mo-molybdopterin is bound by residues N72, Y75–E76, C129, T164, N216, R221, and S232–K234.

The protein belongs to the MsrP family. As to quaternary structure, heterodimer of a catalytic subunit (MsrP) and a heme-binding subunit (MsrQ). The cofactor is Mo-molybdopterin. In terms of processing, predicted to be exported by the Tat system. The position of the signal peptide cleavage has not been experimentally proven.

It is found in the periplasm. The enzyme catalyses L-methionyl-[protein] + a quinone + H2O = L-methionyl-(S)-S-oxide-[protein] + a quinol. It catalyses the reaction L-methionyl-[protein] + a quinone + H2O = L-methionyl-(R)-S-oxide-[protein] + a quinol. In terms of biological role, part of the MsrPQ system that repairs oxidized periplasmic proteins containing methionine sulfoxide residues (Met-O), using respiratory chain electrons. Thus protects these proteins from oxidative-stress damage caused by reactive species of oxygen and chlorine generated by the host defense mechanisms. MsrPQ is essential for the maintenance of envelope integrity under bleach stress, rescuing a wide series of structurally unrelated periplasmic proteins from methionine oxidation. The catalytic subunit MsrP is non-stereospecific, being able to reduce both (R-) and (S-) diastereoisomers of methionine sulfoxide. The sequence is that of Protein-methionine-sulfoxide reductase catalytic subunit MsrP from Actinobacillus succinogenes (strain ATCC 55618 / DSM 22257 / CCUG 43843 / 130Z).